Reading from the N-terminus, the 259-residue chain is Proliferating cell nuclear antigen (259 aa).

A DNA-binding region spans residues 61 to 80; that stretch reads RCDRNIALGVNLTSLTKVLR. Lysine 164 participates in a covalent cross-link: Glycyl lysine isopeptide (Lys-Gly) (interchain with G-Cter in SUMO); alternate. Lysine 164 is covalently cross-linked (Glycyl lysine isopeptide (Lys-Gly) (interchain with G-Cter in ubiquitin); alternate).

The protein belongs to the PCNA family. Homotrimer. Post-translationally, monoubiquitinated on Lys-164 upon DNA damage, and then polyubiquitinated through 'Lys-63'-linkage.

The protein localises to the nucleus. In terms of biological role, this protein is an auxiliary protein of DNA polymerase delta and is involved in the control of eukaryotic DNA replication by increasing the polymerase's processibility during elongation of the leading strand. Involved in DNA repair. This chain is Proliferating cell nuclear antigen, found in Chaetomium thermophilum (strain DSM 1495 / CBS 144.50 / IMI 039719) (Thermochaetoides thermophila).